We begin with the raw amino-acid sequence, 156 residues long: Transcription elongation factor GreA (156 aa).

Residues 7–27 (MTQEGLDKLKLELENLKLVKR) are a coiled coil.

Belongs to the GreA/GreB family.

Its function is as follows. Necessary for efficient RNA polymerase transcription elongation past template-encoded arresting sites. The arresting sites in DNA have the property of trapping a certain fraction of elongating RNA polymerases that pass through, resulting in locked ternary complexes. Cleavage of the nascent transcript by cleavage factors such as GreA or GreB allows the resumption of elongation from the new 3'terminus. GreA releases sequences of 2 to 3 nucleotides. The polypeptide is Transcription elongation factor GreA (Lactococcus lactis subsp. lactis (strain IL1403) (Streptococcus lactis)).